The sequence spans 501 residues: Oxygen-independent coproporphyrinogen-III oxidase-like protein HemZ (501 aa).

One can recognise a Radical SAM core domain in the interval 163–405 (DLYRVKDEVS…VAWTKEHGYV (243 aa)). Residue Y174 coordinates S-adenosyl-L-methionine. [4Fe-4S] cluster-binding residues include C180 and C184. Y186 is an S-adenosyl-L-methionine binding site. [4Fe-4S] cluster is bound at residue C187. S-adenosyl-L-methionine is bound by residues G233, 234 to 235 (GT), E267, Q295, R307, and D332.

The protein belongs to the anaerobic coproporphyrinogen-III oxidase family. HemZ subfamily. The cofactor is [4Fe-4S] cluster.

Its pathway is porphyrin-containing compound metabolism; protoporphyrin-IX biosynthesis. Involved in the biosynthesis of porphyrin-containing compound. This chain is Oxygen-independent coproporphyrinogen-III oxidase-like protein HemZ (hemZ), found in Bacillus subtilis (strain 168).